The chain runs to 215 residues: Mite allergen Der p 7 (215 aa).

The first 17 residues, 1-17 (MMKLLLIAAAAFVAVSA), serve as a signal peptide directing secretion. An N-linked (GlcNAc...) asparagine glycan is attached at asparagine 151.

This sequence belongs to the mite group 7 allergen family.

The protein localises to the secreted. The polypeptide is Mite allergen Der p 7 (DERP7) (Dermatophagoides pteronyssinus (European house dust mite)).